The primary structure comprises 387 residues: MNYQPTPEDRFTFGLWTVGWQGRDPFGDATRQALDPAESVRRLSELGAYGVTFHDDDLIPFGSSDTERESHIKRFRQALDATGMKVPMATTNLFTHPVFKDGAFTANDRDVRRYALRKTIRNIDLAVELGASVYVAWGGREGAESGAAKDVRDALDRMKEAFDLLGEYVTEQGYDLKFAIEPKPNEPRGDILLPTVGHALAFIERLERPELYGVNPEVGHEQMAGLNFPHGIAQALWAGKLFHIDLNGQSGIKYDQDLRFGAGDLRAAFWLVDLLERAGYAGPRHFDFKPPRTEDFDGVWASAAGCMRNYLILKDRAAAFRADPQVQEALAAARLDELARPTAEDGLAALLADRSAYDTFDVDAAAARGMAFEHLDQLAMDHLLGAR.

Residues histidine 54 and aspartate 57 contribute to the active site. Positions 181, 217, 220, 245, 255, 257, and 287 each coordinate Mg(2+).

The protein belongs to the xylose isomerase family. Homotetramer. Mg(2+) is required as a cofactor.

It localises to the cytoplasm. The enzyme catalyses alpha-D-xylose = alpha-D-xylulofuranose. This chain is Xylose isomerase, found in Streptomyces coelicolor (strain ATCC BAA-471 / A3(2) / M145).